The primary structure comprises 430 residues: Adenylosuccinate synthetase (430 aa).

GTP contacts are provided by residues 12–18 and 40–42; these read GDEGKGK and GHT. Aspartate 13 serves as the catalytic Proton acceptor. Positions 13 and 40 each coordinate Mg(2+). IMP is bound by residues 13–16, 38–41, threonine 130, arginine 144, glutamine 225, threonine 240, and arginine 304; these read DEGK and NAGH. Histidine 41 (proton donor) is an active-site residue. 300-306 contributes to the substrate binding site; it reads STTGRPR. Residues arginine 306, 332 to 334, and 414 to 416 each bind GTP; these read KLD and SVG.

It belongs to the adenylosuccinate synthetase family. In terms of assembly, homodimer. It depends on Mg(2+) as a cofactor.

It is found in the cytoplasm. It catalyses the reaction IMP + L-aspartate + GTP = N(6)-(1,2-dicarboxyethyl)-AMP + GDP + phosphate + 2 H(+). It functions in the pathway purine metabolism; AMP biosynthesis via de novo pathway; AMP from IMP: step 1/2. In terms of biological role, plays an important role in the de novo pathway of purine nucleotide biosynthesis. Catalyzes the first committed step in the biosynthesis of AMP from IMP. The polypeptide is Adenylosuccinate synthetase (Pelobacter propionicus (strain DSM 2379 / NBRC 103807 / OttBd1)).